The chain runs to 41 residues: MQVLSSLKTAKQRHRDCQIVRRRGKVYVICKSNPRFKSRQR.

Belongs to the bacterial ribosomal protein bL36 family.

This chain is Large ribosomal subunit protein bL36, found in Neisseria gonorrhoeae (strain ATCC 700825 / FA 1090).